We begin with the raw amino-acid sequence, 496 residues long: Galactokinase (496 aa).

A2 is subject to N-acetylalanine. R56, E62, H63, and D65 together coordinate alpha-D-galactose. ATP contacts are provided by G161, G163, S165, and S166. D210 contacts alpha-D-galactose. D210 functions as the Proton acceptor in the catalytic mechanism. Residues S252, Q253, and K254 each coordinate ATP. Residue Y262 coordinates alpha-D-galactose.

Belongs to the GHMP kinase family. GalK subfamily. Mg(2+) serves as cofactor. It depends on Mn(2+) as a cofactor. Requires Ca(2+) as cofactor. In terms of tissue distribution, expressed in roots, stems, leaves, flowers and young siliques. Higher expression in the elongating middle stem region than in the lower or upper stem region.

It carries out the reaction alpha-D-galactose + ATP = alpha-D-galactose 1-phosphate + ADP + H(+). It functions in the pathway carbohydrate metabolism; galactose metabolism. Functionally, sugar-1-kinase with a very high substrate specificity for the alpha-anomeric configuration of D-galacose (D-Gal). Also efficiently converts 2-deoxy-D-Gal to 2-deoxy-D-al-1-phosphate. The sequence is that of Galactokinase (GAL1) from Arabidopsis thaliana (Mouse-ear cress).